The following is an 80-amino-acid chain: Teretoxin Tan6.1 (80 aa).

Residues 1–21 form the signal peptide; the sequence is MATSGRLLCLCLVLGLVFESL. A propeptide spanning residues 22 to 34 is cleaved from the precursor; that stretch reads GHPGARLPKDGKR.

The protein belongs to the teretoxin M (TM) superfamily. In terms of processing, contains 3 disulfide bonds. As to expression, expressed by the venom duct.

Its subcellular location is the secreted. The chain is Teretoxin Tan6.1 from Terebra anilis (Auger snail).